Here is a 354-residue protein sequence, read N- to C-terminus: Decorin (354 aa).

Residues 1-16 (MKATLVLFLLAQVSWA) form the signal peptide. Positions 17–30 (GPFEQRGLFDFMLE) are excised as a propeptide. Ser34 is a glycosylation site (O-linked (Xyl...) (glycosaminoglycan) serine). 2 disulfide bridges follow: Cys49-Cys55 and Cys53-Cys62. 12 LRR repeats span residues 68–88 (DKVP…NNKI), 89–112 (TEIK…NNKI), 113–136 (SKIS…KNHL), 137–157 (KELP…DNEI), 158–181 (TKLK…GNPL), 182–207 (KNSG…DTNI), 208–228 (TAIP…GNKI), 229–252 (AKVD…FNSI), 253–276 (TVVE…NNKL), 277–299 (LRVP…NNNI), 300–329 (SEVG…SNPV), and 330–354 (RYWQ…GNYK). A glycan (N-linked (GlcNAc...) asparagine) is linked at Asn206. Residues Asn241, Asn257, and Asn298 are each glycosylated (N-linked (GlcNAc...) asparagine). A disulfide bridge connects residues Cys308 and Cys341.

The protein belongs to the small leucine-rich proteoglycan (SLRP) family. SLRP class I subfamily. Binds to type I and type II collagen, fibronectin and TGF-beta. Forms a ternary complex with MFAP2 and ELN. Interacts with DPT. In terms of processing, the attached glycosaminoglycan chain can be either chondroitin sulfate or dermatan sulfate depending upon the tissue of origin.

It is found in the secreted. The protein resides in the extracellular space. It localises to the extracellular matrix. Functionally, may affect the rate of fibrils formation. May be implicated in the dilatation of the rat cervix. The polypeptide is Decorin (Dcn) (Rattus norvegicus (Rat)).